Here is a 137-residue protein sequence, read N- to C-terminus: Large ribosomal subunit protein uL16 (137 aa).

Belongs to the universal ribosomal protein uL16 family. In terms of assembly, part of the 50S ribosomal subunit.

In terms of biological role, binds 23S rRNA and is also seen to make contacts with the A and possibly P site tRNAs. The sequence is that of Large ribosomal subunit protein uL16 from Rhodopseudomonas palustris (strain BisB5).